Consider the following 548-residue polypeptide: Synaptic vesicle 2-related protein (548 aa).

The Cytoplasmic portion of the chain corresponds to Met-1–Ser-87. Residues Ser-25 and Ser-31 each carry the phosphoserine modification. A helical membrane pass occupies residues Val-88–Ala-108. The Vesicular portion of the chain corresponds to Pro-109–Val-122. The chain crosses the membrane as a helical span at residues Ala-123–Ile-143. The Cytoplasmic segment spans residues Ser-144 to Ser-156. The chain crosses the membrane as a helical span at residues Val-157 to Leu-177. The Vesicular segment spans residues Val-178–Arg-180. The chain crosses the membrane as a helical span at residues Gly-181–Leu-201. Residues Pro-202–Cys-209 are Cytoplasmic-facing. A helical membrane pass occupies residues Ile-210–Phe-230. At Val-231–Arg-238 the chain is on the vesicular side. Residues Trp-239–Pro-259 traverse the membrane as a helical segment. The Cytoplasmic segment spans residues Glu-260–Thr-316. The helical transmembrane segment at Thr-317–Leu-337 threads the bilayer. Topologically, residues Thr-338–Tyr-373 are vesicular. A helical membrane pass occupies residues Met-374–Ile-394. At Asp-395 to Lys-401 the chain is on the cytoplasmic side. Residues Thr-402 to Gly-422 form a helical membrane-spanning segment. The Vesicular segment spans residues Arg-423–Asn-424. A helical transmembrane segment spans residues Val-425–Tyr-445. Topologically, residues Val-446–Arg-457 are cytoplasmic. A helical transmembrane segment spans residues Ala-458 to Ile-478. The Vesicular portion of the chain corresponds to Ala-479–Leu-489. A helical membrane pass occupies residues Thr-490–Ile-510. At Glu-511–Glu-548 the chain is on the cytoplasmic side. The tract at residues Arg-523–Glu-548 is disordered. Residues Gly-533–Glu-548 show a composition bias toward polar residues. At Ser-542 the chain carries Phosphoserine.

Belongs to the major facilitator superfamily. In terms of tissue distribution, detected in brain (at protein level). Detected in brain, in synaptic layers of the cerebellum, hippocampus and cerebral cortex.

It is found in the cytoplasmic vesicle. It localises to the secretory vesicle. The protein localises to the synaptic vesicle membrane. This Rattus norvegicus (Rat) protein is Synaptic vesicle 2-related protein (Svop).